Here is a 277-residue protein sequence, read N- to C-terminus: Putative phosphoenolpyruvate synthase regulatory protein (277 aa).

Residue 157–164 coordinates ADP; sequence GVSRCGKT.

This sequence belongs to the pyruvate, phosphate/water dikinase regulatory protein family. PSRP subfamily.

It carries out the reaction [pyruvate, water dikinase] + ADP = [pyruvate, water dikinase]-phosphate + AMP + H(+). It catalyses the reaction [pyruvate, water dikinase]-phosphate + phosphate + H(+) = [pyruvate, water dikinase] + diphosphate. Its function is as follows. Bifunctional serine/threonine kinase and phosphorylase involved in the regulation of the phosphoenolpyruvate synthase (PEPS) by catalyzing its phosphorylation/dephosphorylation. This chain is Putative phosphoenolpyruvate synthase regulatory protein, found in Citrobacter koseri (strain ATCC BAA-895 / CDC 4225-83 / SGSC4696).